An 878-amino-acid chain; its full sequence is Lon protease 2 (878 aa).

Residues 85–281 form the Lon N-terminal domain; it reads LYLLPVKERP…KVLSLFKHEI (197 aa). 434-441 is an ATP binding site; the sequence is GPPGVGKT. Positions 668–850 constitute a Lon proteolytic domain; that stretch reads NQQMGTVTGL…DDVAKLTFHI (183 aa). Active-site residues include Ser756 and Lys799.

This sequence belongs to the peptidase S16 family. Homohexamer. Organized in a ring with a central cavity.

Its subcellular location is the cytoplasm. It catalyses the reaction Hydrolysis of proteins in presence of ATP.. Functionally, ATP-dependent serine protease that mediates the selective degradation of mutant and abnormal proteins as well as certain short-lived regulatory proteins. Required for cellular homeostasis and for survival from DNA damage and developmental changes induced by stress. Degrades polypeptides processively to yield small peptide fragments that are 5 to 10 amino acids long. Binds to DNA in a double-stranded, site-specific manner. The chain is Lon protease 2 from Hydrogenovibrio crunogenus (strain DSM 25203 / XCL-2) (Thiomicrospira crunogena).